A 136-amino-acid chain; its full sequence is Ribonuclease P protein component (136 aa).

The protein belongs to the RnpA family. Consists of a catalytic RNA component (M1 or rnpB) and a protein subunit.

The catalysed reaction is Endonucleolytic cleavage of RNA, removing 5'-extranucleotides from tRNA precursor.. Its function is as follows. RNaseP catalyzes the removal of the 5'-leader sequence from pre-tRNA to produce the mature 5'-terminus. It can also cleave other RNA substrates such as 4.5S RNA. The protein component plays an auxiliary but essential role in vivo by binding to the 5'-leader sequence and broadening the substrate specificity of the ribozyme. The polypeptide is Ribonuclease P protein component (Arthrobacter sp. (strain FB24)).